Consider the following 164-residue polypeptide: FMN reductase (NADH) RutF (164 aa).

Belongs to the non-flavoprotein flavin reductase family. RutF subfamily.

It catalyses the reaction FMNH2 + NAD(+) = FMN + NADH + 2 H(+). Functionally, catalyzes the reduction of FMN to FMNH2 which is used to reduce pyrimidine by RutA via the Rut pathway. This is FMN reductase (NADH) RutF from Klebsiella variicola (strain At-22).